We begin with the raw amino-acid sequence, 429 residues long: Glutamate-1-semialdehyde 2,1-aminomutase 1 (429 aa).

Lysine 268 bears the N6-(pyridoxal phosphate)lysine mark.

This sequence belongs to the class-III pyridoxal-phosphate-dependent aminotransferase family. HemL subfamily. Homodimer. It depends on pyridoxal 5'-phosphate as a cofactor.

Its subcellular location is the cytoplasm. It carries out the reaction (S)-4-amino-5-oxopentanoate = 5-aminolevulinate. Its pathway is porphyrin-containing compound metabolism; protoporphyrin-IX biosynthesis; 5-aminolevulinate from L-glutamyl-tRNA(Glu): step 2/2. The protein is Glutamate-1-semialdehyde 2,1-aminomutase 1 of Staphylococcus haemolyticus (strain JCSC1435).